Reading from the N-terminus, the 109-residue chain is UPF0060 membrane protein YfjF (109 aa).

Transmembrane regions (helical) follow at residues 6-26 (ILLF…VWLW), 32-52 (PAGY…LPTF), 61-81 (VYAA…WLVD), and 87-107 (LYDW…LFAP).

Belongs to the UPF0060 family.

Its subcellular location is the cell membrane. The chain is UPF0060 membrane protein YfjF (yfjF) from Bacillus subtilis (strain 168).